Here is a 185-residue protein sequence, read N- to C-terminus: MTKDVINNMSTHMDKTIDALRKEYQRVRTGRASTGLLDEIKVDFYGTPSPINQVATLAVPEPRTITLQPWDAKMIPVIEKAIMNANLGLTPANDGKVIRLNIPPLTEERRKDIVKQLKKLAEDAKVAVRNIRRDAIDELKKQEKDKKISEDDLKRAEKEVQDVTNSHVAKIDEVFVHKEKEVMEV.

Residues 141–161 are disordered; the sequence is KQEKDKKISEDDLKRAEKEVQ.

The protein belongs to the RRF family.

The protein localises to the cytoplasm. Functionally, responsible for the release of ribosomes from messenger RNA at the termination of protein biosynthesis. May increase the efficiency of translation by recycling ribosomes from one round of translation to another. In Geotalea uraniireducens (strain Rf4) (Geobacter uraniireducens), this protein is Ribosome-recycling factor.